A 284-amino-acid polypeptide reads, in one-letter code: MIRLPAVAGAFYEGEEDKLKKQIEWSFLHPLGPGKIPQVPPQKSKRNNLFFIVPHAGYMYSGPVAAHAYYYLASEGIPDTVIILGPNHTGLGSYVSLWPKGKWKTPLGEIEIDEQIAMDLVRESEVIDIDEKAHLYEHSIEVQVPFLQYFFDSKTKIVPIVIMMQTPEISEYLAEGISKIMQKYKDKDIVVIASSDMNHYEPHEKTIEKDNMAIEKILSLDYKGLFNVVEEKDVTACGFGPMMTVLMLAKKFNKKPYVLKHATSGDTSGDKSSVVGYLSVRFGD.

This sequence belongs to the MEMO1 family.

The chain is MEMO1 family protein STK_20620 from Sulfurisphaera tokodaii (strain DSM 16993 / JCM 10545 / NBRC 100140 / 7) (Sulfolobus tokodaii).